The sequence spans 244 residues: 14-3-3 protein beta/alpha-A (244 aa).

Methionine 1 is subject to N-acetylmethionine.

It belongs to the 14-3-3 family. Homodimer, and heterodimer with other family members.

The protein localises to the cytoplasm. In terms of biological role, adapter protein implicated in the regulation of a large spectrum of both general and specialized signaling pathways. Binds to a large number of partners, usually by recognition of a phosphoserine or phosphothreonine motif. Binding generally results in the modulation of the activity of the binding partner. This Xenopus laevis (African clawed frog) protein is 14-3-3 protein beta/alpha-A (ywhab-a).